Reading from the N-terminus, the 517-residue chain is Amidophosphoribosyltransferase (517 aa).

Position 1 is an N-acetylmethionine (M1). Residues 1-11 constitute a propeptide that is removed on maturation; sequence MELEELGIREE. C12 functions as the Nucleophile in the catalytic mechanism. In terms of domain architecture, Glutamine amidotransferase type-2 spans 12 to 261; sequence CGVFGCIASG…PGEIVEISRH (250 aa). Position 280 (C280) interacts with [4Fe-4S] cluster. 3 residues coordinate Mg(2+): S327, D389, and D390. Residues C426, C503, and C506 each coordinate [4Fe-4S] cluster.

This sequence in the C-terminal section; belongs to the purine/pyrimidine phosphoribosyltransferase family. As to quaternary structure, homotetramer. Mg(2+) is required as a cofactor. It depends on [4Fe-4S] cluster as a cofactor.

It carries out the reaction 5-phospho-beta-D-ribosylamine + L-glutamate + diphosphate = 5-phospho-alpha-D-ribose 1-diphosphate + L-glutamine + H2O. It functions in the pathway purine metabolism; IMP biosynthesis via de novo pathway; N(1)-(5-phospho-D-ribosyl)glycinamide from 5-phospho-alpha-D-ribose 1-diphosphate: step 1/2. Functionally, catalyzes the formation of phosphoribosylamine from phosphoribosylpyrophosphate (PRPP) and glutamine. The protein is Amidophosphoribosyltransferase of Mus musculus (Mouse).